Consider the following 226-residue polypeptide: Elongation factor G (226 aa).

The protein belongs to the GTP-binding elongation factor family. EF-G/EF-2 subfamily.

The protein localises to the cytoplasm. Its function is as follows. Catalyzes the GTP-dependent ribosomal translocation step during translation elongation. During this step, the ribosome changes from the pre-translocational (PRE) to the post-translocational (POST) state as the newly formed A-site-bound peptidyl-tRNA and P-site-bound deacylated tRNA move to the P and E sites, respectively. Catalyzes the coordinated movement of the two tRNA molecules, the mRNA and conformational changes in the ribosome. The polypeptide is Elongation factor G (fusA) (Neisseria gonorrhoeae).